The chain runs to 90 residues: Keratin-associated protein 19-1 (90 aa).

A 26 X 2 AA repeats of G-[YCGS] region spans residues 5-84 (GSYYGGLGYS…CCRPSYNGGY (80 aa)).

Belongs to the KRTAP type 19 family. In terms of assembly, interacts with hair keratins. Detected in the upper portion of the hair cortex.

In the hair cortex, hair keratin intermediate filaments are embedded in an interfilamentous matrix, consisting of hair keratin-associated proteins (KRTAP), which are essential for the formation of a rigid and resistant hair shaft through their extensive disulfide bond cross-linking with abundant cysteine residues of hair keratins. The matrix proteins include the high-sulfur and high-glycine-tyrosine keratins. This chain is Keratin-associated protein 19-1 (KRTAP19-1), found in Homo sapiens (Human).